We begin with the raw amino-acid sequence, 341 residues long: L-threonine 3-dehydrogenase (341 aa).

Cysteine 38 serves as a coordination point for Zn(2+). Active-site charge relay system residues include threonine 40 and histidine 43. Zn(2+) is bound by residues histidine 63, glutamate 64, cysteine 93, cysteine 96, cysteine 99, and cysteine 107. Residues isoleucine 175, aspartate 195, arginine 200, 262–264, and 286–287 contribute to the NAD(+) site; these read LGI and IY.

This sequence belongs to the zinc-containing alcohol dehydrogenase family. As to quaternary structure, homotetramer. Requires Zn(2+) as cofactor.

It localises to the cytoplasm. It carries out the reaction L-threonine + NAD(+) = (2S)-2-amino-3-oxobutanoate + NADH + H(+). It participates in amino-acid degradation; L-threonine degradation via oxydo-reductase pathway; glycine from L-threonine: step 1/2. In terms of biological role, catalyzes the NAD(+)-dependent oxidation of L-threonine to 2-amino-3-ketobutyrate. The chain is L-threonine 3-dehydrogenase from Shewanella loihica (strain ATCC BAA-1088 / PV-4).